A 227-amino-acid polypeptide reads, in one-letter code: Ribose-5-phosphate isomerase A (227 aa).

Substrate-binding positions include 26–29 (TGST), 82–85 (DGAD), and 95–98 (KGGG). Residue glutamate 104 is the Proton acceptor of the active site. Residue lysine 122 coordinates substrate.

It belongs to the ribose 5-phosphate isomerase family. As to quaternary structure, homodimer.

It catalyses the reaction aldehydo-D-ribose 5-phosphate = D-ribulose 5-phosphate. The protein operates within carbohydrate degradation; pentose phosphate pathway; D-ribose 5-phosphate from D-ribulose 5-phosphate (non-oxidative stage): step 1/1. Its function is as follows. Catalyzes the reversible conversion of ribose-5-phosphate to ribulose 5-phosphate. The sequence is that of Ribose-5-phosphate isomerase A from Streptococcus equi subsp. equi (strain 4047).